Consider the following 299-residue polypeptide: Coenzyme PQQ synthesis protein B (299 aa).

This sequence belongs to the PqqB family.

It participates in cofactor biosynthesis; pyrroloquinoline quinone biosynthesis. Its function is as follows. May be involved in the transport of PQQ or its precursor to the periplasm. The chain is Coenzyme PQQ synthesis protein B from Xanthomonas oryzae pv. oryzae (strain MAFF 311018).